A 237-amino-acid chain; its full sequence is Large ribosomal subunit protein uL2 (237 aa).

Polar residues predominate over residues 1-11 (MGKRLISQNRG). 2 disordered regions span residues 1–26 (MGKRLISQNRGRGTPKYRSPSHKRKG) and 204–237 (PYGGGRHQHLGKPSSVSRNTSPGRKVGHIASRRT). 2 stretches are compositionally biased toward basic residues: residues 13–26 (GTPKYRSPSHKRKG) and 228–237 (KVGHIASRRT).

The protein belongs to the universal ribosomal protein uL2 family. In terms of assembly, part of the 50S ribosomal subunit. Forms a bridge to the 30S subunit in the 70S ribosome.

In terms of biological role, one of the primary rRNA binding proteins. Required for association of the 30S and 50S subunits to form the 70S ribosome, for tRNA binding and peptide bond formation. It has been suggested to have peptidyltransferase activity; this is somewhat controversial. Makes several contacts with the 16S rRNA in the 70S ribosome. This Methanococcus vannielii protein is Large ribosomal subunit protein uL2.